A 94-amino-acid polypeptide reads, in one-letter code: MLKPLGDRVVLKVQKEEEQSIGGIVIASNAKEKPTTGEVIAVGNGRILDNGQRVEPEVKVGQSVVFDKYAGSEVKYEGEEYLVIRENDIIAVID.

Belongs to the GroES chaperonin family. Heptamer of 7 subunits arranged in a ring. Interacts with the chaperonin GroEL.

The protein localises to the cytoplasm. In terms of biological role, together with the chaperonin GroEL, plays an essential role in assisting protein folding. The GroEL-GroES system forms a nano-cage that allows encapsulation of the non-native substrate proteins and provides a physical environment optimized to promote and accelerate protein folding. GroES binds to the apical surface of the GroEL ring, thereby capping the opening of the GroEL channel. This chain is Co-chaperonin GroES, found in Ligilactobacillus salivarius (strain UCC118) (Lactobacillus salivarius).